A 285-amino-acid polypeptide reads, in one-letter code: Acetyl-coenzyme A carboxylase carboxyl transferase subunit beta 2 (285 aa).

The segment at 1–20 is disordered; sequence MAIRSLFSGNRKKKEDGQEK. One can recognise a CoA carboxyltransferase N-terminal domain in the interval 26 to 285; it reads LMTKCPECRH…MHTKGGVQHV (260 aa). Zn(2+)-binding residues include cysteine 30, cysteine 33, cysteine 49, and cysteine 52. Residues 30–52 form a C4-type zinc finger; sequence CPECRHIQLTKELEKNHKVCTKC.

It belongs to the AccD/PCCB family. Acetyl-CoA carboxylase is a heterohexamer composed of biotin carboxyl carrier protein (AccB), biotin carboxylase (AccC) and two subunits each of ACCase subunit alpha (AccA) and ACCase subunit beta (AccD). Zn(2+) serves as cofactor.

The protein resides in the cytoplasm. The catalysed reaction is N(6)-carboxybiotinyl-L-lysyl-[protein] + acetyl-CoA = N(6)-biotinyl-L-lysyl-[protein] + malonyl-CoA. Its pathway is lipid metabolism; malonyl-CoA biosynthesis; malonyl-CoA from acetyl-CoA: step 1/1. Functionally, component of the acetyl coenzyme A carboxylase (ACC) complex. Biotin carboxylase (BC) catalyzes the carboxylation of biotin on its carrier protein (BCCP) and then the CO(2) group is transferred by the transcarboxylase to acetyl-CoA to form malonyl-CoA. This Lysinibacillus sphaericus (strain C3-41) protein is Acetyl-coenzyme A carboxylase carboxyl transferase subunit beta 2.